The sequence spans 379 residues: Type II methyltransferase M.SsoII (379 aa).

Residues 9 to 66 (IKEKRERLHMTQKEFADALGLSKYGDRTIRRWERGETKPTGAELKAVIDFPDTPPYPN) enclose the HTH cro/C1-type domain. Positions 72–379 (YRMIDLFAGI…AEKIISTLDS (308 aa)) constitute an SAM-dependent MTase C5-type domain. Cys-142 is a catalytic residue.

The protein belongs to the class I-like SAM-binding methyltransferase superfamily. C5-methyltransferase family.

The enzyme catalyses a 2'-deoxycytidine in DNA + S-adenosyl-L-methionine = a 5-methyl-2'-deoxycytidine in DNA + S-adenosyl-L-homocysteine + H(+). Functionally, a methylase that recognizes the double-stranded sequence 5'-CCNGG-3', methylates C-2 on both strands, and protects the DNA from cleavage by the SsoII endonuclease. The protein is Type II methyltransferase M.SsoII (ssoIIM) of Shigella sonnei.